A 390-amino-acid polypeptide reads, in one-letter code: MAAVGVGGSTAAAGAGAVSSGALEPGSTTAAHRRLKYISLAVLVVQNASLILSIRYARTLPGDRFFATTAVVMAEVLKGLTCLLLLFAQKRGNVKHLVLFLHEAVLVQYVDTLKLAVPSLIYTLQNNLQYVAISNLPAATFQVTYQLKILTTALFSVLMLNRSLSRLQWASLLLLFTGVAIVQAQQAGGSGPRPLDQNPGAGLAAVVASCLSSGFAGVYFEKILKGSSGSVWLRNLQLGLFGTALGLVGLWWAEGTAVASQGFFFGYTPAVWGVVLNQAFGGLLVAVVVKYADNILKGFATSLSIVLSTVASIRLFGFHLDPLFALGAGLVIGAVYLYSLPRGAVKAIASASASGPCIHQQPPGQPPPPQLSSRGDLTTEPFLPKSVLVK.

The tract at residues 1 to 24 (MAAVGVGGSTAAAGAGAVSSGALE) is disordered. Transmembrane regions (helical) follow at residues 3 to 23 (AVGV…SGAL), 37 to 57 (YISL…IRYA), 65 to 85 (FFAT…CLLL), 97 to 117 (LVLF…KLAV), 140 to 160 (TFQV…VLML), 169 to 189 (WASL…QAGG), 200 to 220 (GAGL…GVYF), 238 to 258 (LGLF…GTAV), 269 to 289 (PAVW…AVVV), and 315 to 335 (LFGF…IGAV). Residues 9 to 22 (STAAAGAGAVSSGA) show a composition bias toward low complexity. The segment at 356-390 (PCIHQQPPGQPPPPQLSSRGDLTTEPFLPKSVLVK) is disordered.

It belongs to the nucleotide-sugar transporter family. SLC35A subfamily. In terms of assembly, interacts with SLC35A3; the interaction is reduced in the presence of SLC35A4. Found in a complex with SLC35A3 and SLC35A4.

The protein resides in the golgi apparatus membrane. The catalysed reaction is UMP(out) + UDP-alpha-D-galactose(in) = UMP(in) + UDP-alpha-D-galactose(out). It carries out the reaction UDP-N-acetyl-alpha-D-galactosamine(in) + UMP(out) = UDP-N-acetyl-alpha-D-galactosamine(out) + UMP(in). It catalyses the reaction UMP(out) + UDP-alpha-D-glucose(in) = UMP(in) + UDP-alpha-D-glucose(out). The enzyme catalyses UMP(out) + UDP-N-acetyl-alpha-D-glucosamine(in) = UMP(in) + UDP-N-acetyl-alpha-D-glucosamine(out). The catalysed reaction is UDP-alpha-D-galactose(in) + AMP(out) = UDP-alpha-D-galactose(out) + AMP(in). It carries out the reaction UDP-alpha-D-galactose(in) + CMP(out) = UDP-alpha-D-galactose(out) + CMP(in). It catalyses the reaction UDP-N-acetyl-alpha-D-galactosamine(out) + UDP-alpha-D-galactose(in) = UDP-N-acetyl-alpha-D-galactosamine(in) + UDP-alpha-D-galactose(out). The enzyme catalyses UDP-N-acetyl-alpha-D-glucosamine(out) + UDP-alpha-D-galactose(in) = UDP-N-acetyl-alpha-D-glucosamine(in) + UDP-alpha-D-galactose(out). The catalysed reaction is UDP-alpha-D-galactose(in) + UDP-alpha-D-glucose(out) = UDP-alpha-D-galactose(out) + UDP-alpha-D-glucose(in). It carries out the reaction UMP(out) + CMP(in) = UMP(in) + CMP(out). It catalyses the reaction UMP(out) + AMP(in) = UMP(in) + AMP(out). Functionally, transports uridine diphosphate galactose (UDP-galactose) from the cytosol into the Golgi apparatus. It functions as an antiporter that exchanges UDP-galactose for UMP. It is also able to exchange UDP-galactose for AMP and CMP, and to transport UDP-N-acetylgalactosamine (UDP-GalNAc) and other nucleotide sugars. As a provider of UDP-galactose to galactosyltransferases present in the Golgi apparatus, it is necessary for globotriaosylceramide/globoside (Gb3Cer) synthesis from lactosylceramide. This is UDP-galactose translocator from Mus musculus (Mouse).